Here is a 715-residue protein sequence, read N- to C-terminus: Tensin-4 (715 aa).

Residues 1–18 form the signal peptide; that stretch reads MSQVMSSPLLAGGHAVSL. Ser-82 carries the phosphoserine modification. Disordered regions lie at residues 159–183, 195–251, 291–364, and 376–435; these read RCHD…RSGG, RSSS…SPLV, SLLH…CPPS, and LING…ARDM. Over residues 197–206 the composition is skewed to polar residues; the sequence is SSESLIFSGN. A Phosphoserine modification is found at Ser-248. Low complexity predominate over residues 291 to 325; that stretch reads SLLHSSNSSHQSSSRSLESPANSSSSLHSLGSVSL. One can recognise an SH2 domain in the interval 449-556; it reads WFKPNITREQ…ALPCKLTIPQ (108 aa). The region spanning 582-705 is the PTB domain; the sequence is CHTLYLSSVS…QPASQVIGLV (124 aa).

The protein belongs to the PTEN phosphatase protein family. Interacts (via SH2 domain) with Rho GTPase-activating protein DLC1 (via C-terminus); the interaction is independent of DLC1 tyrosine phosphorylation. Interacts with integrin ITGB1; the interaction displaces tensin TNS3 from the ITGB1 cytoplasmic tail and promotes ITGB1 stability. Interacts (via SH2 domain) with E3 ubiquitin-protein ligase CBL (phosphorylated on 'Tyr-774'); the interaction is enhanced in the presence of EGF and reduces interaction of CBL with EGFR. Interacts (via SH2 domain) with receptor tyrosine kinase MET (when phosphorylated); the interaction increases MET protein stability. In terms of processing, proteolytically cleaved by caspase-3 during apoptosis. As to expression, expressed at low levels in colon (at protein level). Expressed in prostate and placenta.

Its subcellular location is the cell junction. It localises to the focal adhesion. It is found in the cytoplasm. The protein localises to the cytoskeleton. In terms of biological role, promotes EGF-induced cell migration by displacing tensin TNS3 from the cytoplasmic tail of integrin ITGB1 which results in dissociation of TNS3 from focal adhesions, disassembly of actin stress fibers and initiation of cell migration. Suppresses ligand-induced degradation of EGFR by reducing EGFR ubiquitination in the presence of EGF. Increases MET protein stability by inhibiting MET endocytosis and subsequent lysosomal degradation which leads to increased cell survival, proliferation and migration. This is Tensin-4 (TNS4) from Homo sapiens (Human).